Reading from the N-terminus, the 194-residue chain is Peptidyl-tRNA hydrolase (194 aa).

Tyr16 provides a ligand contact to tRNA. Residue His21 is the Proton acceptor of the active site. 3 residues coordinate tRNA: Phe67, Asn69, and Asn115.

The protein belongs to the PTH family. As to quaternary structure, monomer.

Its subcellular location is the cytoplasm. The enzyme catalyses an N-acyl-L-alpha-aminoacyl-tRNA + H2O = an N-acyl-L-amino acid + a tRNA + H(+). In terms of biological role, hydrolyzes ribosome-free peptidyl-tRNAs (with 1 or more amino acids incorporated), which drop off the ribosome during protein synthesis, or as a result of ribosome stalling. Functionally, catalyzes the release of premature peptidyl moieties from peptidyl-tRNA molecules trapped in stalled 50S ribosomal subunits, and thus maintains levels of free tRNAs and 50S ribosomes. The protein is Peptidyl-tRNA hydrolase of Escherichia fergusonii (strain ATCC 35469 / DSM 13698 / CCUG 18766 / IAM 14443 / JCM 21226 / LMG 7866 / NBRC 102419 / NCTC 12128 / CDC 0568-73).